The primary structure comprises 744 residues: Adenosylcobalamin-dependent ribonucleoside-triphosphate reductase (744 aa).

Cysteine 120 and cysteine 424 are disulfide-bonded. The effector region-1 stretch occupies residues 148 to 159 (SMPFSFLFDQLM). The effector region-2 stretch occupies residues 169 to 318 (VDDNINQIPQ…ICNLIGKTVV (150 aa)). Residues cysteine 413 and glutamate 415 contribute to the active site. Residues 570–631 (FHYAGYLIQR…SKNFASAGTV (62 aa)) form an adenosylcobalamin-binding-1 region. The tract at residues 690–729 (LKQAPKEPINKKAYEDRVAMITGDVKEVFENQNKDQKGLE) is adenosylcobalamin-binding-2.

It belongs to the class II ribonucleoside-triphosphate reductase family. Monomer. The cofactor is adenosylcob(III)alamin.

It catalyses the reaction a 2'-deoxyribonucleoside 5'-triphosphate + [thioredoxin]-disulfide + H2O = a ribonucleoside 5'-triphosphate + [thioredoxin]-dithiol. Allosterically regulated by ATP and dNTP. This Lactobacillus helveticus (strain DPC 4571) protein is Adenosylcobalamin-dependent ribonucleoside-triphosphate reductase (rtpR).